The chain runs to 396 residues: CCA-adding enzyme (396 aa).

The ATP site is built by glycine 32 and arginine 35. Glycine 32 and arginine 35 together coordinate CTP. Mg(2+) is bound by residues aspartate 45 and aspartate 47. Residues arginine 116, aspartate 159, arginine 162, arginine 165, and arginine 168 each contribute to the ATP site. The CTP site is built by arginine 116, aspartate 159, arginine 162, arginine 165, and arginine 168.

It belongs to the tRNA nucleotidyltransferase/poly(A) polymerase family. Bacterial CCA-adding enzyme type 3 subfamily. As to quaternary structure, homodimer. The cofactor is Mg(2+).

The enzyme catalyses a tRNA precursor + 2 CTP + ATP = a tRNA with a 3' CCA end + 3 diphosphate. It carries out the reaction a tRNA with a 3' CCA end + 2 CTP + ATP = a tRNA with a 3' CCACCA end + 3 diphosphate. Functionally, catalyzes the addition and repair of the essential 3'-terminal CCA sequence in tRNAs without using a nucleic acid template. Adds these three nucleotides in the order of C, C, and A to the tRNA nucleotide-73, using CTP and ATP as substrates and producing inorganic pyrophosphate. tRNA 3'-terminal CCA addition is required both for tRNA processing and repair. Also involved in tRNA surveillance by mediating tandem CCA addition to generate a CCACCA at the 3' terminus of unstable tRNAs. While stable tRNAs receive only 3'-terminal CCA, unstable tRNAs are marked with CCACCA and rapidly degraded. In Lactobacillus delbrueckii subsp. bulgaricus (strain ATCC 11842 / DSM 20081 / BCRC 10696 / JCM 1002 / NBRC 13953 / NCIMB 11778 / NCTC 12712 / WDCM 00102 / Lb 14), this protein is CCA-adding enzyme.